Consider the following 337-residue polypeptide: Outer membrane protein assembly factor BamC (337 aa).

An N-terminal signal peptide occupies residues 1 to 16 (MKKWLFPFAFVATLAG). A lipid anchor (N-palmitoyl cysteine) is attached at cysteine 17. A lipid anchor (S-diacylglycerol cysteine) is attached at cysteine 17.

It belongs to the BamC family. Part of the Bam complex.

Its subcellular location is the cell outer membrane. Part of the outer membrane protein assembly complex, which is involved in assembly and insertion of beta-barrel proteins into the outer membrane. The sequence is that of Outer membrane protein assembly factor BamC from Pasteurella multocida (strain Pm70).